Here is a 216-residue protein sequence, read N- to C-terminus: Octanoyltransferase (216 aa).

A BPL/LPL catalytic domain is found at Asp29–Pro209. Residues Arg68 to His75, Ala140 to Gly142, and Gly153 to Ala155 each bind substrate. The active-site Acyl-thioester intermediate is Cys171.

Belongs to the LipB family.

The protein localises to the cytoplasm. It catalyses the reaction octanoyl-[ACP] + L-lysyl-[protein] = N(6)-octanoyl-L-lysyl-[protein] + holo-[ACP] + H(+). It functions in the pathway protein modification; protein lipoylation via endogenous pathway; protein N(6)-(lipoyl)lysine from octanoyl-[acyl-carrier-protein]: step 1/2. In terms of biological role, catalyzes the transfer of endogenously produced octanoic acid from octanoyl-acyl-carrier-protein onto the lipoyl domains of lipoate-dependent enzymes. Lipoyl-ACP can also act as a substrate although octanoyl-ACP is likely to be the physiological substrate. This is Octanoyltransferase from Rhodospirillum rubrum (strain ATCC 11170 / ATH 1.1.1 / DSM 467 / LMG 4362 / NCIMB 8255 / S1).